The primary structure comprises 849 residues: Autoinducer 1 sensor kinase/phosphatase LuxN (849 aa).

Transmembrane regions (helical) follow at residues 9-29 (IVYA…MWLF), 41-61 (VIFG…IAWI), 160-180 (SYFF…LVAM), 196-216 (IAGI…MTYF), 220-242 (FSLT…YALL), 251-275 (YIAY…AIFI), and 283-301 (WLIA…QLLY). The Histidine kinase domain maps to 468–683 (SIAHEMRNPL…EFHLYFPVVP (216 aa)). H471 bears the Phosphohistidine; by autocatalysis mark. The 114-residue stretch at 722–835 (TVLIVDDKEV…ALRHVLGNWL (114 aa)) folds into the Response regulatory domain. A 4-aspartylphosphate modification is found at D771.

The protein resides in the cell inner membrane. The enzyme catalyses ATP + protein L-histidine = ADP + protein N-phospho-L-histidine.. Functionally, at low cell density, in the absence of AI-1 (autoinducer 1), LuxN has a kinase activity and autophosphorylates on His-471. The phosphoryl group is then transferred on Asp-771 of the response regulator domain. The phosphoryl group is transferred to LuxU, and ultimately to LuxO. At high cell density, in the presence of AI-1, the kinase activity is inactivated, and the response regulator domain has a phosphatase activity. LuxN phosphatase acts on itself. As LuxU could function to establish an equilibrium between the aspartyl-phosphate of LuxN and the aspartyl-phosphate of LuxO, LuxU transfers phosphate from LuxO to LuxN and finally phosphate is drained from the system. The protein is Autoinducer 1 sensor kinase/phosphatase LuxN (luxN) of Vibrio harveyi (Beneckea harveyi).